Consider the following 1137-residue polypeptide: Bone sialoprotein-binding protein (1137 aa).

An N-terminal signal peptide occupies residues 1 to 52; the sequence is MINRDNKKAITKKGMISNRLNKFSIRKYTVGTASILVGTTLIFGLGNQEAKA. The ligand binding A region stretch occupies residues 53–601; the sequence is AENTSTENAK…GDGTVKPEEK (549 aa). Disordered stretches follow at residues 54-249 and 675-697; these read ENTS…TAPT and LPTK…VTVK. A compositionally biased stretch (basic and acidic residues) spans 61–75; it reads AKQDEASASDNKEVV. The segment covering 77–89 has biased composition (polar residues); sequence ETENNSTQKNDLT. Over residues 92–106 the composition is skewed to basic and acidic residues; it reads IKKETNTDSHQEAKE. The segment covering 109–126 has biased composition (low complexity); that stretch reads TTSSTQQQQNNATTSTET. Positions 130–145 are enriched in basic and acidic residues; sequence NIEKENVKPSTDKTAT. Over residues 158-207 the composition is skewed to polar residues; sequence PNNTNNDVTTKPSTSEIQTTPTTPQESTNIENSQPQPTPSKVDNQVTDAT. Basic and acidic residues predominate over residues 216 to 241; the sequence is SKEELKNNPEKLKELVRNDSNTDRST. 3 consecutive CNA-B domains span residues 602–714, 715–824, and 825–935; these read LYKI…YKEP, KYNL…YKTP, and KYSL…EEDT. The segment at 896-1112 is disordered; sequence TQTGTNTTED…TGSENNGSNN (217 aa). 2 stretches are compositionally biased toward acidic residues: residues 903-913 and 930-1076; these read TEDDKDADGGE and YFEE…DSDS. The LPXTG sorting signal signature appears at 1100 to 1104; that stretch reads LPETG. Residue Thr-1103 is modified to Pentaglycyl murein peptidoglycan amidated threonine. Residues 1104–1137 constitute a propeptide, removed by sortase; that stretch reads GSENNGSNNATLFGGLFAALGSLLLFGRRKKQNK.

The protein belongs to the serine-aspartate repeat-containing protein (SDr) family.

It localises to the secreted. Its subcellular location is the cell wall. Its function is as follows. Specifically interacts with bone sialoprotein (BSP), a glycoprotein of bone and dentin extracellular matrix. Could contribute to staphylococcal osteomyelitis and arthritis. This Staphylococcus aureus (strain MRSA252) protein is Bone sialoprotein-binding protein (bbp).